The primary structure comprises 382 residues: tRNA-queuosine alpha-mannosyltransferase (382 aa).

It belongs to the glycosyltransferase group 1 family. Glycosyltransferase 4 subfamily.

Its subcellular location is the cytoplasm. It is found in the nucleus. The catalysed reaction is queuosine(34) in tRNA(Asp) + GDP-alpha-D-mannose = O-4''-alpha-D-mannosylqueuosine(34) in tRNA(Asp) + GDP + H(+). Functionally, glycosyltransferase that specifically catalyzes mannosylation of cytoplasmic tRNA(Asp) modified with queuosine at position 34 (queuosine(34)). Mannosylates the cyclopentene moiety of queuosine(34) in tRNA(Asp) to form mannosyl-queuosine(34). Mannosylation of queuosine(34) in tRNA(Asp) is required to slow-down elongation at cognate codons, GAC and GAU, thereby regulating protein translation. In Gallus gallus (Chicken), this protein is tRNA-queuosine alpha-mannosyltransferase (GTDC1).